The sequence spans 433 residues: ATP-dependent protease ATPase subunit HslU (433 aa).

Residues Val-18, 60–65 (GVGKTE), Asp-246, Glu-311, and Arg-383 contribute to the ATP site.

It belongs to the ClpX chaperone family. HslU subfamily. As to quaternary structure, a double ring-shaped homohexamer of HslV is capped on each side by a ring-shaped HslU homohexamer. The assembly of the HslU/HslV complex is dependent on binding of ATP.

It localises to the cytoplasm. Its function is as follows. ATPase subunit of a proteasome-like degradation complex; this subunit has chaperone activity. The binding of ATP and its subsequent hydrolysis by HslU are essential for unfolding of protein substrates subsequently hydrolyzed by HslV. HslU recognizes the N-terminal part of its protein substrates and unfolds these before they are guided to HslV for hydrolysis. The chain is ATP-dependent protease ATPase subunit HslU from Rhodopseudomonas palustris (strain HaA2).